The primary structure comprises 99 residues: DNA-binding protein HU (99 aa).

The segment at 63–82 is disordered; that stretch reads HRKEREGRNPKTGAKMKIDA.

Belongs to the bacterial histone-like protein family. Homodimer.

In terms of biological role, histone-like DNA-binding protein which is capable of wrapping DNA to stabilize it, and thus to prevent its denaturation under extreme environmental conditions. The sequence is that of DNA-binding protein HU (hup) from Rickettsia prowazekii (strain Madrid E).